Consider the following 483-residue polypeptide: M protein, serotype 6 (483 aa).

The first 42 residues, 1-42 (MAKNNTNRHYSLRKLKKGTASVAVALSVIGAGLVVNTNEVSA), serve as a signal peptide directing secretion. Residues 54–171 (DKARELLNKY…IGTLKKTLDE (118 aa)) are a coiled coil. Tandem repeats lie at residues 69-75 (MLQANND), 76-82 (KLTTENN), 83-89 (NLTDQNK), 90-96 (NLTTENK), 97-103 (NLTDQNK), 104-110 (NLTTENK), 111-117 (NLTDQNK), and 118-124 (NLTTENK). Residues 69–138 (MLQANNDKLT…EENRLTTENK (70 aa)) are 10 X 7 AA approximate tandem repeats of [KMNR]-L-[TQ]-[TDA]-[ENQ]-N-[NDK]. The span at 74–87 (NDKLTTENNNLTDQ) shows a compositional bias: polar residues. A disordered region spans residues 74–157 (NDKLTTENNN…EEEAANKERE (84 aa)). The segment covering 88 to 113 (NKNLTTENKNLTDQNKNLTTENKNLT) has biased composition (low complexity). 2 stretches are compositionally biased toward basic and acidic residues: residues 122–135 (ENKELKAEENRLTT) and 143–157 (KLSEAEEEAANKERE). The stretch at 125 to 131 (ELKAEEN) is one 9-1; approximate repeat. A run of 5 repeats spans residues 132–138 (RLTTENK), 157–181 (ENKEAIGTLKKTLDETVKDKIAKEQ), 182–206 (ESKETIGTLKKTLDETVKDKIAKEQ), 207–231 (ESKETIGTLKKTLDETVKDKIAKEQ), and 232–256 (ESKETIGTLKKILDETVKDKIAREQ). The 4.5 X 25 AA tandem repeats of E-[NS]-K-E-[TA]-I-G-T-L-K-K-[TI]-L-D-E-T-V-K-D-K-I-A-[KR]-E-Q stretch occupies residues 157-269 (ENKEAIGTLK…QDIGALKQEL (113 aa)). Disordered regions lie at residues 255–298 (EQKS…EAKK) and 314–345 (VKEEKQISDASRQGLRRDLDASREAKKQVEKA). One copy of the 5-2; truncated repeat lies at 257-269 (KSKQDIGALKQEL). Basic and acidic residues-rich tracts occupy residues 268-298 (ELAKKDEGNKVSEASRKGLRRDLDASREAKK) and 328-345 (LRRDLDASREAKKQVEKA). C repeat units follow at residues 270 to 304 (AKKDEGNKVSEASRKGLRRDLDASREAKKQVEKDL) and 312 to 346 (DKVKEEKQISDASRQGLRRDLDASREAKKQVEKAL). The segment at 279–347 (SEASRKGLRR…AKKQVEKALE (69 aa)) is binding to CD46. Residues 279 to 347 (SEASRKGLRR…AKKQVEKALE (69 aa)) form a two directly repeated 27 amino acid blocks separated by 15 amino acids region. The stretch at 280–408 (EASRKGLRRD…LAKLRAGKAS (129 aa)) forms a coiled coil. The hydrophilic stretch occupies residues 348–411 (EANSKLAALE…LRAGKASDSQ (64 aa)). D repeat units lie at residues 379-384 (AKLEAE), 385-390 (AKALKE), 393-398 (AKQAEE), and 400-405 (AKLRAG). Residues 400–455 (AKLRAGKASDSQTPDAKPGNKVVPGKGQAPQAGTKPNQNKAPMKETKRQLPSTGET) form a disordered region. An LPXTG sorting signal motif is present at residues 449-453 (LPSTG). Thr-452 bears the Pentaglycyl murein peptidoglycan amidated threonine mark. Positions 453 to 483 (GETANPFFTAAALTVMATAGVAAVVKRKEEN) are cleaved as a propeptide — removed by sortase.

The protein belongs to the M protein family.

It is found in the secreted. Its subcellular location is the cell wall. In terms of biological role, mediates the attachment of S.pyogenes to skin epithelial cells through the binding of the human membrane cofactor protein CD46. Also binds to the factor H and factor H-like protein 1. These interactions could contribute to the fact that the M6 protein protects the bacterium from the phagocytosis by regulating the complement activation on the bacterial surface. The sequence is that of M protein, serotype 6 (emm6) from Streptococcus pyogenes.